Here is a 316-residue protein sequence, read N- to C-terminus: Pantothenate kinase (316 aa).

95 to 102 (GSVAVGKS) is a binding site for ATP.

The protein belongs to the prokaryotic pantothenate kinase family.

It is found in the cytoplasm. The catalysed reaction is (R)-pantothenate + ATP = (R)-4'-phosphopantothenate + ADP + H(+). It participates in cofactor biosynthesis; coenzyme A biosynthesis; CoA from (R)-pantothenate: step 1/5. The polypeptide is Pantothenate kinase (Salmonella agona (strain SL483)).